Here is a 96-residue protein sequence, read N- to C-terminus: Co-chaperonin GroES (96 aa).

Belongs to the GroES chaperonin family. Heptamer of 7 subunits arranged in a ring. Interacts with the chaperonin GroEL.

The protein resides in the cytoplasm. Its function is as follows. Together with the chaperonin GroEL, plays an essential role in assisting protein folding. The GroEL-GroES system forms a nano-cage that allows encapsulation of the non-native substrate proteins and provides a physical environment optimized to promote and accelerate protein folding. GroES binds to the apical surface of the GroEL ring, thereby capping the opening of the GroEL channel. This Haemophilus influenzae (strain PittEE) protein is Co-chaperonin GroES.